Consider the following 1541-residue polypeptide: Multiple epidermal growth factor-like domains protein 6 (1541 aa).

An N-terminal signal peptide occupies residues 1-30; sequence MSFLEEARAAGRAVVLALVLLLLPAVPVGA. One can recognise an EMI domain in the interval 44–125; sequence MPHVCAEQEL…QQPDEEGCLS (82 aa). 15 disulfides stabilise this stretch: Cys48-Cys111, Cys77-Cys83, Cys110-Cys123, Cys128-Cys139, Cys133-Cys147, Cys149-Cys158, Cys165-Cys176, Cys172-Cys185, Cys187-Cys200, Cys242-Cys255, Cys248-Cys268, Cys270-Cys283, Cys289-Cys300, Cys296-Cys309, and Cys311-Cys324. One can recognise an EGF-like 1 domain in the interval 124–159; sequence LSAECSASLCFHGGRCVPGSAQPCHCPPGFQGPRCQ. The EGF-like 2; calcium-binding domain occupies 161–201; that stretch reads DVDECRTHNGGCQHRCVNTPGSYLCECKPGFRLHTDSRTCL. 2 consecutive EGF-like domains span residues 206-242 and 238-284; these read CALG…GRHC and DGRH…KACE. N-linked (GlcNAc...) asparagine glycosylation occurs at Asn252. The 41-residue stretch at 285-325 folds into the EGF-like 5; calcium-binding domain; it reads DVDECAAGLAQCAHGCLNTQGSFKCVCHAGYELGADGRQCY. 2 consecutive EGF-like domains span residues 335–370 and 375–411; these read CEAN…QRTC and DCAD…CGCE. Residues 412-452 enclose the EGF-like 8; calcium-binding domain; that stretch reads DVDECASSRGGCEHHCTNLAGSFQCSCEAGYRLHEDRRGCS. Cystine bridges form between Cys416-Cys427, Cys423-Cys436, Cys438-Cys451, Cys520-Cys533, Cys527-Cys540, Cys542-Cys551, Cys564-Cys576, Cys570-Cys583, Cys585-Cys594, Cys607-Cys619, Cys613-Cys626, and Cys628-Cys637. 19 consecutive EGF-like domains span residues 516–552, 560–595, 603–638, 736–770, 783–814, 822–857, 865–901, 909–944, 955–987, 995–1030, 1038–1073, 1081–1116, 1124–1159, 1211–1246, 1254–1289, 1297–1332, 1345–1375, 1383–1418, and 1469–1504; these read FGHD…LICN, FGKN…TNCE, YGKH…RFCH, FGVN…EDCE, QEIC…SRCQ, YGPS…FSCQ, WGPD…PRCE, FGPG…TFCE, DCRS…PRCA, YGHN…PSCL, YGDN…LACE, VRAG…DKCQ, FGEA…SGCE, YGPG…TDCN, FGPN…VRCE, FGVG…RHCE, HLEC…QACE, HGAG…HFCE, and FGPS…PTCR. A glycan (N-linked (GlcNAc...) asparagine) is linked at Asn739. 15 disulfide bridges follow: Cys740/Cys751, Cys744/Cys758, Cys760/Cys769, Cys786/Cys795, Cys789/Cys802, Cys804/Cys813, Cys826/Cys838, Cys832/Cys845, Cys847/Cys856, Cys869/Cys882, Cys873/Cys889, Cys891/Cys900, Cys913/Cys925, Cys919/Cys932, and Cys934/Cys943. Intrachain disulfides connect Cys999–Cys1011, Cys1005–Cys1018, Cys1020–Cys1029, Cys1042–Cys1054, Cys1048–Cys1061, Cys1063–Cys1072, Cys1085–Cys1097, Cys1091–Cys1104, Cys1106–Cys1115, Cys1128–Cys1140, Cys1134–Cys1147, Cys1149–Cys1158, Cys1215–Cys1227, Cys1221–Cys1234, Cys1236–Cys1245, Cys1258–Cys1270, Cys1264–Cys1277, Cys1279–Cys1288, Cys1301–Cys1313, Cys1307–Cys1320, Cys1322–Cys1331, Cys1348–Cys1356, Cys1350–Cys1363, Cys1365–Cys1374, Cys1387–Cys1399, Cys1393–Cys1406, Cys1408–Cys1417, Cys1473–Cys1485, Cys1479–Cys1492, and Cys1494–Cys1503. Residues 1509 to 1541 form a disordered region; the sequence is LRLPENPSLAQGSAGTLPASSRPTSRSGGPARH. A compositionally biased stretch (polar residues) spans 1516–1535; it reads SLAQGSAGTLPASSRPTSRS.

The protein resides in the secreted. This chain is Multiple epidermal growth factor-like domains protein 6 (MEGF6), found in Homo sapiens (Human).